Here is a 445-residue protein sequence, read N- to C-terminus: Proline--tRNA ligase (445 aa).

The protein belongs to the class-II aminoacyl-tRNA synthetase family. ProS type 2 subfamily. Homodimer.

Its subcellular location is the cytoplasm. It carries out the reaction tRNA(Pro) + L-proline + ATP = L-prolyl-tRNA(Pro) + AMP + diphosphate. Functionally, catalyzes the attachment of proline to tRNA(Pro) in a two-step reaction: proline is first activated by ATP to form Pro-AMP and then transferred to the acceptor end of tRNA(Pro). The polypeptide is Proline--tRNA ligase (Cereibacter sphaeroides (strain ATCC 17025 / ATH 2.4.3) (Rhodobacter sphaeroides)).